We begin with the raw amino-acid sequence, 166 residues long: Thioredoxin, mitochondrial (166 aa).

The N-terminal 59 residues, 1-59 (MAQRLLLRRFLTSIISGKPSQSRWAPVASRALQTPQYSPGYLTVTPSQARSIYTTRVCS), are a transit peptide targeting the mitochondrion. Residues 61–166 (TFNIQDGPDF…LEAFLKKLIG (106 aa)) enclose the Thioredoxin domain. Catalysis depends on nucleophile residues cysteine 90 and cysteine 93. The cysteines at positions 90 and 93 are disulfide-linked. Lysine 152 carries the post-translational modification N6-acetyllysine; alternate. N6-succinyllysine; alternate is present on lysine 152.

The protein belongs to the thioredoxin family. In terms of assembly, monomer.

It is found in the mitochondrion. Its function is as follows. Important for the control of mitochondrial reactive oxygen species homeostasis, apoptosis regulation and cell viability. Is involved in various redox reactions including the reduction of protein disulfide bonds, through the reversible oxidation of its active center dithiol to a disulfide. The protein is Thioredoxin, mitochondrial (TXN2) of Bos taurus (Bovine).